Reading from the N-terminus, the 216-residue chain is RNA pyrophosphohydrolase (216 aa).

Residues 6 to 149 enclose the Nudix hydrolase domain; sequence GFRPNVGIIL…KRDVYQLALT (144 aa). Positions 38–59 match the Nudix box motif; that stretch reads GGIKYGETPMQAMYRELHEETG. Residues 159-188 are disordered; sequence AQRTDKSRGPRAPRYPRVANGHAASEAPAA.

The protein belongs to the Nudix hydrolase family. RppH subfamily. It depends on a divalent metal cation as a cofactor.

Accelerates the degradation of transcripts by removing pyrophosphate from the 5'-end of triphosphorylated RNA, leading to a more labile monophosphorylated state that can stimulate subsequent ribonuclease cleavage. In Burkholderia mallei (strain NCTC 10247), this protein is RNA pyrophosphohydrolase.